Here is a 437-residue protein sequence, read N- to C-terminus: Protein arginine methyltransferase NDUFAF7, mitochondrial (437 aa).

The N-terminal 42 residues, 1–42 (MSGLARLQRLQKFGFLMVSASANRPIQRYQCSRTEKPQKRTS), are a transit peptide targeting the mitochondrion.

It belongs to the NDUFAF7 family.

It is found in the mitochondrion. The enzyme catalyses L-arginyl-[protein] + 2 S-adenosyl-L-methionine = N(omega),N(omega)'-dimethyl-L-arginyl-[protein] + 2 S-adenosyl-L-homocysteine + 2 H(+). In terms of biological role, arginine methyltransferase involved in the assembly or stability of mitochondrial NADH:ubiquinone oxidoreductase complex (complex I). Acts by mediating symmetric dimethylation of 'Arg-118' of ndufs2 after it assembles into the complex I, stabilizing the early intermediate complex. In Xenopus laevis (African clawed frog), this protein is Protein arginine methyltransferase NDUFAF7, mitochondrial.